Reading from the N-terminus, the 313-residue chain is MMENYKHFTVLLDEAVNGLNIRPDGIYIDGTFGRGGHSRLILSQLGEEGRLLAIDRDPQAIAVAKTIDDPRFSIIHGPFSALGEYVADRDLIGKIDGILLDLGVSSPQLDDAERGFSFMRDGPLDMRMDPTRGQSAAEWLQTAEEADIAWVLKTYGEERFAKRIARAIVEHNREQPMTRTKELAEVVAAATPVKDKFKHPATRTFQAVRIWVNSELEEIEQALKSSLHVLAPGGRLSIISFHSLEDRIVKRFMRENSRGPQVPAGLPMTEEQLKKLGGRQLRALGKLMPGEEEVAENPRARSSVLRIAERTNA.

Residues 35–37, aspartate 55, phenylalanine 79, aspartate 101, and glutamine 108 contribute to the S-adenosyl-L-methionine site; that span reads GGH.

Belongs to the methyltransferase superfamily. RsmH family.

It is found in the cytoplasm. The enzyme catalyses cytidine(1402) in 16S rRNA + S-adenosyl-L-methionine = N(4)-methylcytidine(1402) in 16S rRNA + S-adenosyl-L-homocysteine + H(+). Specifically methylates the N4 position of cytidine in position 1402 (C1402) of 16S rRNA. This Escherichia coli O6:H1 (strain CFT073 / ATCC 700928 / UPEC) protein is Ribosomal RNA small subunit methyltransferase H.